The chain runs to 1154 residues: DNA-directed RNA polymerase, mitochondrial (1154 aa).

The transit peptide at 1-30 directs the protein to the mitochondrion; that stretch reads MLRRKIQTYLSRSHIRRGLCGLRFFQTQRL. The segment at 221–243 is disordered; the sequence is ESENGKDQNGDSSLKEKQPDVET. A compositionally biased stretch (basic and acidic residues) spans 223–240; it reads ENGKDQNGDSSLKEKQPD. Catalysis depends on residues Asp821, Lys890, and Asp1061.

The protein belongs to the phage and mitochondrial RNA polymerase family.

The protein resides in the mitochondrion. It catalyses the reaction RNA(n) + a ribonucleoside 5'-triphosphate = RNA(n+1) + diphosphate. Functionally, DNA-dependent RNA polymerase catalyzes the transcription of DNA into RNA using the four ribonucleoside triphosphates as substrates. Combines in the mitochondrion with mitochondrial transcription factor mtf1 as a holoenzyme to recognize and initiate transcription at the core mitochondrial promoters. The chain is DNA-directed RNA polymerase, mitochondrial (rpo41) from Schizosaccharomyces pombe (strain 972 / ATCC 24843) (Fission yeast).